Here is a 114-residue protein sequence, read N- to C-terminus: Hydrogenase maturation factor HypA (114 aa).

His-2 serves as a coordination point for Ni(2+). Zn(2+)-binding residues include Cys-73, Cys-76, Cys-90, and Cys-93.

It belongs to the HypA/HybF family.

Functionally, involved in the maturation of [NiFe] hydrogenases. Required for nickel insertion into the metal center of the hydrogenase. This chain is Hydrogenase maturation factor HypA, found in Klebsiella pneumoniae subsp. pneumoniae (strain ATCC 700721 / MGH 78578).